Reading from the N-terminus, the 577-residue chain is Serine/threonine-protein kinase AGC1-5 (577 aa).

The span at Met-1–Val-12 shows a compositional bias: polar residues. The disordered stretch occupies residues Met-1–Gly-151. Basic and acidic residues predominate over residues Pro-44–Val-55. 2 stretches are compositionally biased toward polar residues: residues Thr-69–Gly-87 and Leu-110–Ala-120. A Protein kinase domain is found at Phe-185–Phe-509. Residues Leu-191–Val-199 and Lys-214 contribute to the ATP site. Asp-310 functions as the Proton acceptor in the catalytic mechanism. The region spanning Glu-510 to Phe-577 is the AGC-kinase C-terminal domain.

The protein belongs to the protein kinase superfamily. AGC Ser/Thr protein kinase family. As to quaternary structure, interacts with PDPK1/PDK1. In terms of processing, autophosphorylated and phosphorylated by PDPK1/PDK1. As to expression, specifically expressed in pollen grains.

The catalysed reaction is L-seryl-[protein] + ATP = O-phospho-L-seryl-[protein] + ADP + H(+). It carries out the reaction L-threonyl-[protein] + ATP = O-phospho-L-threonyl-[protein] + ADP + H(+). Its activity is regulated as follows. Activated by PDPK1/PDK1. Functions redudantly with AGC1-7 as signaling component in the pollen tube. Required for polarized growth of pollen tubes. In Arabidopsis thaliana (Mouse-ear cress), this protein is Serine/threonine-protein kinase AGC1-5.